A 479-amino-acid polypeptide reads, in one-letter code: Glutamate--tRNA ligase 2 (479 aa).

A 'HIGH' region motif is present at residues 18–28 (PSPTGFLHIGG). Residues 244–248 (KLSKR) carry the 'KMSKS' region motif. Position 247 (K247) interacts with ATP.

It belongs to the class-I aminoacyl-tRNA synthetase family. Glutamate--tRNA ligase type 1 subfamily. As to quaternary structure, monomer.

It is found in the cytoplasm. It catalyses the reaction tRNA(Glu) + L-glutamate + ATP = L-glutamyl-tRNA(Glu) + AMP + diphosphate. Functionally, catalyzes the attachment of glutamate to tRNA(Glu) in a two-step reaction: glutamate is first activated by ATP to form Glu-AMP and then transferred to the acceptor end of tRNA(Glu). This chain is Glutamate--tRNA ligase 2, found in Maricaulis maris (strain MCS10) (Caulobacter maris).